The chain runs to 165 residues: Destrin (165 aa).

An N-acetylalanine modification is found at Ala2. The ADF-H domain maps to 4 to 153 (GVQVADEVCR…NRACIAEKLG (150 aa)). A Nuclear localization signal motif is present at residues 30–34 (KKRKK).

It belongs to the actin-binding proteins ADF family.

In terms of biological role, actin-depolymerizing protein. Severs actin filaments (F-actin) and binds to actin monomers (G-actin). Acts in a pH-independent manner. The sequence is that of Destrin (DSTN) from Gallus gallus (Chicken).